The following is a 205-amino-acid chain: Guanylate kinase (205 aa).

In terms of domain architecture, Guanylate kinase-like spans 6–184 (GLLIVLSGPA…AVERIKAIVT (179 aa)). An ATP-binding site is contributed by 13 to 20 (GPAGVGKG).

The protein belongs to the guanylate kinase family.

The protein resides in the cytoplasm. It catalyses the reaction GMP + ATP = GDP + ADP. Essential for recycling GMP and indirectly, cGMP. The polypeptide is Guanylate kinase (Shouchella clausii (strain KSM-K16) (Alkalihalobacillus clausii)).